Reading from the N-terminus, the 402-residue chain is Phosphoglycerate kinase (402 aa).

Substrate is bound by residues 24–26 (DFN), R40, 63–66 (HFGR), R122, and R155. Residues K206, G297, E328, and 357-360 (GGDS) each bind ATP.

Belongs to the phosphoglycerate kinase family. As to quaternary structure, monomer.

It localises to the cytoplasm. It carries out the reaction (2R)-3-phosphoglycerate + ATP = (2R)-3-phospho-glyceroyl phosphate + ADP. It functions in the pathway carbohydrate degradation; glycolysis; pyruvate from D-glyceraldehyde 3-phosphate: step 2/5. The chain is Phosphoglycerate kinase from Synechococcus sp. (strain WH7803).